The chain runs to 859 residues: DNA mismatch repair protein MutS (859 aa).

614–621 (GPNMGGKS) is an ATP binding site.

This sequence belongs to the DNA mismatch repair MutS family.

Functionally, this protein is involved in the repair of mismatches in DNA. It is possible that it carries out the mismatch recognition step. This protein has a weak ATPase activity. This is DNA mismatch repair protein MutS from Histophilus somni (strain 2336) (Haemophilus somnus).